A 162-amino-acid chain; its full sequence is Protein-export protein SecB (162 aa).

The protein belongs to the SecB family. In terms of assembly, homotetramer, a dimer of dimers. One homotetramer interacts with 1 SecA dimer.

It localises to the cytoplasm. In terms of biological role, one of the proteins required for the normal export of preproteins out of the cell cytoplasm. It is a molecular chaperone that binds to a subset of precursor proteins, maintaining them in a translocation-competent state. It also specifically binds to its receptor SecA. This is Protein-export protein SecB from Pseudomonas syringae pv. syringae (strain B728a).